The following is a 66-amino-acid chain: uncharacterized protein (66 aa).

This is an uncharacterized protein from Homo sapiens (Human).